The chain runs to 260 residues: 3'-5' ssDNA/RNA exonuclease TatD (260 aa).

The a divalent metal cation site is built by Glu92, His128, and His153.

The protein belongs to the metallo-dependent hydrolases superfamily. TatD-type hydrolase family. TatD subfamily. Monomer. Requires Mg(2+) as cofactor.

The protein localises to the cytoplasm. Functionally, 3'-5' exonuclease that prefers single-stranded DNA and RNA. May play a role in the H(2)O(2)-induced DNA damage repair. The polypeptide is 3'-5' ssDNA/RNA exonuclease TatD (Pantoea sp. (strain At-9b)).